A 700-amino-acid polypeptide reads, in one-letter code: Protein kinase C, eye isozyme (700 aa).

2 consecutive Phorbol-ester/DAG-type zinc fingers follow at residues 71-121 and 136-186; these read GHRF…VFKC and KHGW…PPMC. Residues 189–310 form the C2 domain; sequence DISEVRGKLL…LQKEPVDGWY (122 aa). Ca(2+) contacts are provided by D222, D228, D281, D283, S286, and D289. The Protein kinase domain occupies 371–629; the sequence is FNFVKVIGKG…RQEITTHPFF (259 aa). Residues 377 to 385 and K400 each bind ATP; that span reads IGKGSFGKV. D495 (proton acceptor) is an active-site residue. Residues 630–700 form the AGC-kinase C-terminal domain; it reads RNVDWDKAEA…FMNPEFITII (71 aa).

Belongs to the protein kinase superfamily. AGC Ser/Thr protein kinase family. PKC subfamily. It depends on Ca(2+) as a cofactor. In terms of tissue distribution, exclusively expressed in photoreceptor cells.

It catalyses the reaction L-seryl-[protein] + ATP = O-phospho-L-seryl-[protein] + ADP + H(+). The catalysed reaction is L-threonyl-[protein] + ATP = O-phospho-L-threonyl-[protein] + ADP + H(+). This is a calcium-activated, phospholipid-dependent, serine- and threonine-specific enzyme. This isozyme is a negative regulator of the visual transduction cascade and has been shown to be required for photoreceptor cell inactivation and light adaptation. Negative regulation is dependent on interaction with scaffolding protein inaD. Acts in a hh-signaling pathway which regulates the Duox-dependent gut immune response to bacterial uracil; required for the activation of Cad99C and consequently Cad99C-dependent endosome formation, which is essential for the Duox-dependent production of reactive oxygen species (ROS) in response to intestinal bacterial infection. This chain is Protein kinase C, eye isozyme (inaC), found in Drosophila melanogaster (Fruit fly).